We begin with the raw amino-acid sequence, 93 residues long: Large ribosomal subunit protein uL23cz/uL23cy (93 aa).

Belongs to the universal ribosomal protein uL23 family. As to quaternary structure, part of the 50S ribosomal subunit.

It localises to the plastid. The protein localises to the chloroplast. Its function is as follows. Binds to 23S rRNA. In Nymphaea alba (White water-lily), this protein is Large ribosomal subunit protein uL23cz/uL23cy (rpl23-A).